The primary structure comprises 525 residues: Glutathione hydrolase-like YwrD proenzyme (525 aa).

Thr339 acts as the Nucleophile in catalysis.

The protein belongs to the gamma-glutamyltransferase family. This enzyme consists of two polypeptide chains, which are synthesized from a single polypeptide. Post-translationally, cleaved by autocatalysis into a large and a small subunit.

It catalyses the reaction an N-terminal (5-L-glutamyl)-[peptide] + an alpha-amino acid = 5-L-glutamyl amino acid + an N-terminal L-alpha-aminoacyl-[peptide]. The catalysed reaction is glutathione + H2O = L-cysteinylglycine + L-glutamate. It carries out the reaction an S-substituted glutathione + H2O = an S-substituted L-cysteinylglycine + L-glutamate. Functionally, overexpressed protein with an N-terminal His tag has been reported not to hydrolyze glutathione; it is not clear if the construct is processed to 2 subunits. This chain is Glutathione hydrolase-like YwrD proenzyme (ywrD), found in Bacillus subtilis (strain 168).